The sequence spans 156 residues: Small ribosomal subunit protein uS7 (156 aa).

Belongs to the universal ribosomal protein uS7 family. As to quaternary structure, part of the 30S ribosomal subunit. Contacts proteins S9 and S11.

One of the primary rRNA binding proteins, it binds directly to 16S rRNA where it nucleates assembly of the head domain of the 30S subunit. Is located at the subunit interface close to the decoding center, probably blocks exit of the E-site tRNA. This Alkalilimnicola ehrlichii (strain ATCC BAA-1101 / DSM 17681 / MLHE-1) protein is Small ribosomal subunit protein uS7.